Reading from the N-terminus, the 484-residue chain is uncharacterized protein (484 aa).

The HTH gntR-type domain maps to valine 14–serine 82. Residues glutamine 42–aspartate 61 constitute a DNA-binding region (H-T-H motif). Lysine 327 is modified (N6-(pyridoxal phosphate)lysine).

This sequence in the C-terminal section; belongs to the class-I pyridoxal-phosphate-dependent aminotransferase family. Pyridoxal 5'-phosphate serves as cofactor.

This is an uncharacterized protein from Bacillus subtilis (strain 168).